Consider the following 173-residue polypeptide: Co-chaperone protein HscB (173 aa).

Residues aspartate 2–leucine 74 form the J domain.

Belongs to the HscB family. As to quaternary structure, interacts with HscA and stimulates its ATPase activity. Interacts with IscU.

Functionally, co-chaperone involved in the maturation of iron-sulfur cluster-containing proteins. Seems to help targeting proteins to be folded toward HscA. The protein is Co-chaperone protein HscB of Photorhabdus laumondii subsp. laumondii (strain DSM 15139 / CIP 105565 / TT01) (Photorhabdus luminescens subsp. laumondii).